Reading from the N-terminus, the 405-residue chain is MATEQTAITRATFDEVILPVYAPADFIPVKGKGSRVWDQQGKEYIDFAGGIAVTALGHCHPALVEALKSQGETLWHTSNVFTNEPALRLGRKLIDATFAERVLFMNSGTEANETAFKLARHYACVRHSPFKTKIIAFHNAFHGRSLFTVSVGGQPKYSDGFGPKPADIIHVPFNDLHAVKAVMDDHTCAVVVEPIQGEGGVQAATPEFLKGLRDLCDEHQALLVFDEVQCGMGRTGDLFAYMHYGVTPDILTSAKALGGGFPVSAMLTTQEIASAFHVGSHGSTYGGNPLACAVAGAAFDIINTPEVLQGIHTKRQQFVQHLQAIDEQFDIFSDIRGMGLLIGAELKPKYKGRARDFLYAGAEAGVMVLNAGADVMRFAPSLVVEEADIHEGMQRFAQAVGKVVA.

Pyridoxal 5'-phosphate contacts are provided by residues 108–109 and Phe141; that span reads GT. Arg144 serves as a coordination point for N(2)-acetyl-L-ornithine. 226 to 229 serves as a coordination point for pyridoxal 5'-phosphate; sequence DEVQ. Lys255 carries the N6-(pyridoxal phosphate)lysine modification. Ser283 serves as a coordination point for N(2)-acetyl-L-ornithine. Residue Thr284 coordinates pyridoxal 5'-phosphate.

Belongs to the class-III pyridoxal-phosphate-dependent aminotransferase family. ArgD subfamily. As to quaternary structure, homodimer. Requires pyridoxal 5'-phosphate as cofactor.

The protein localises to the cytoplasm. The catalysed reaction is N(2)-acetyl-L-ornithine + 2-oxoglutarate = N-acetyl-L-glutamate 5-semialdehyde + L-glutamate. It carries out the reaction N-succinyl-(2S,6S)-2,6-diaminopimelate + 2-oxoglutarate = (S)-2-succinylamino-6-oxoheptanedioate + L-glutamate. Its pathway is amino-acid biosynthesis; L-arginine biosynthesis; N(2)-acetyl-L-ornithine from L-glutamate: step 4/4. It functions in the pathway amino-acid biosynthesis; L-lysine biosynthesis via DAP pathway; LL-2,6-diaminopimelate from (S)-tetrahydrodipicolinate (succinylase route): step 2/3. With respect to regulation, inhibited by gabaculine (Gcn). In terms of biological role, involved in both the arginine and lysine biosynthetic pathways. The polypeptide is Acetylornithine/succinyldiaminopimelate aminotransferase (Salmonella typhimurium (strain LT2 / SGSC1412 / ATCC 700720)).